We begin with the raw amino-acid sequence, 362 residues long: Chorismate synthase (362 aa).

Residue R47 participates in NADP(+) binding. FMN-binding positions include 124-126 (RSS), G286, 301-305 (KPTAT), and R327.

The protein belongs to the chorismate synthase family. As to quaternary structure, homotetramer. It depends on FMNH2 as a cofactor.

The catalysed reaction is 5-O-(1-carboxyvinyl)-3-phosphoshikimate = chorismate + phosphate. It functions in the pathway metabolic intermediate biosynthesis; chorismate biosynthesis; chorismate from D-erythrose 4-phosphate and phosphoenolpyruvate: step 7/7. In terms of biological role, catalyzes the anti-1,4-elimination of the C-3 phosphate and the C-6 proR hydrogen from 5-enolpyruvylshikimate-3-phosphate (EPSP) to yield chorismate, which is the branch point compound that serves as the starting substrate for the three terminal pathways of aromatic amino acid biosynthesis. This reaction introduces a second double bond into the aromatic ring system. The protein is Chorismate synthase of Trichormus variabilis (strain ATCC 29413 / PCC 7937) (Anabaena variabilis).